A 471-amino-acid chain; its full sequence is Tetratricopeptide repeat protein 29 (471 aa).

TPR repeat units follow at residues 92 to 131 (DKLR…EAAE), 136 to 173 (YEEV…AQLI), 182 to 215 (AEAE…TQGR), 234 to 267 (VRTY…AREG), 274 to 307 (GEAS…STSL), 314 to 347 (GRAY…ARNN), and 354 to 387 (IQAC…AMEV).

It is found in the cytoplasm. The protein localises to the cytoskeleton. It localises to the flagellum axoneme. Its function is as follows. Axonemal protein which is implicated in axonemal and/or peri-axonemal structure assembly and regulates flagellum assembly and beating and therefore sperm motility. In Rattus norvegicus (Rat), this protein is Tetratricopeptide repeat protein 29 (Ttc29).